Reading from the N-terminus, the 121-residue chain is Large ribosomal subunit protein uL18 (121 aa).

The protein belongs to the universal ribosomal protein uL18 family. In terms of assembly, part of the 50S ribosomal subunit; part of the 5S rRNA/L5/L18/L25 subcomplex. Contacts the 5S and 23S rRNAs.

Its function is as follows. This is one of the proteins that bind and probably mediate the attachment of the 5S RNA into the large ribosomal subunit, where it forms part of the central protuberance. This is Large ribosomal subunit protein uL18 from Verminephrobacter eiseniae (strain EF01-2).